The sequence spans 161 residues: V-type proton ATPase subunit c (161 aa).

The Lumenal portion of the chain corresponds to 1-9 (MSTDLCPVY). The chain crosses the membrane as a helical span at residues 10–32 (APFFGVMGCTAAIVFASFGAAYG). Topologically, residues 33–54 (TAKAGVGISAMGVLRPDLIVKN) are cytoplasmic. A helical transmembrane segment spans residues 55 to 75 (TIPVVMAGIIAIYGLVVSVLI). At 76-91 (SGNLKQILSLYSGFIQ) the chain is on the lumenal side. The chain crosses the membrane as a helical span at residues 92–113 (LGAGLSVGLAGLAAGFAIGIVG). The Cytoplasmic portion of the chain corresponds to 114-125 (DAGVRGTAQQPR). A helical membrane pass occupies residues 126-151 (LFVAMILILIFAEVLGLYGLIVALLL). At 152–161 (NTRATDNVTC) the chain is on the lumenal side.

Belongs to the V-ATPase proteolipid subunit family. In terms of assembly, V-ATPase is a heteromultimeric enzyme composed of a peripheral catalytic V1 complex (components A to H) attached to an integral membrane V0 proton pore complex (components: a, c, c', c'', d, e, f and VOA1). The decameric c-ring forms the proton-conducting pore, and is composed of eight proteolipid subunits c, one subunit c' and one subunit c''.

Its subcellular location is the vacuole membrane. Functionally, proton-conducting pore forming subunit of the V0 complex of vacuolar(H+)-ATPase (V-ATPase), a multisubunit enzyme composed of a peripheral complex (V1) that hydrolyzes ATP and a membrane integral complex (V0) that translocates protons. V-ATPase is responsible for acidifying and maintaining the pH of intracellular compartments. This Schizosaccharomyces pombe (strain 972 / ATCC 24843) (Fission yeast) protein is V-type proton ATPase subunit c.